Here is an 808-residue protein sequence, read N- to C-terminus: Phospholipase D alpha 1 (808 aa).

The region spanning 1–125 (MAKTLLHGTL…LEGEEVDKWV (125 aa)) is the C2 domain. A Ca(2+)-binding site is contributed by Asp-186. In terms of domain architecture, PLD phosphodiesterase 1 spans 326–364 (TIFTHHQKIVVVDSEMPTSGSENRRVVSFVGGIDLCDGR). Residues His-331, Lys-333, and Asp-338 contribute to the active site. An a 1,2-diacyl-sn-glycero-3-phosphate-binding site is contributed by His-331. Ca(2+)-binding residues include His-370 and His-404. In terms of domain architecture, PLD phosphodiesterase 2 spans 654–681 (FMIYVHAKMMIVDDEYIIIGSANINQRS). Catalysis depends on residues His-659, Lys-661, and Asp-666. His-659 serves as a coordination point for a 1,2-diacyl-sn-glycero-3-phosphate. Glu-720 is a Ca(2+) binding site.

Belongs to the phospholipase D family. C2-PLD subfamily. Requires Ca(2+) as cofactor.

The catalysed reaction is a 1,2-diacyl-sn-glycero-3-phosphocholine + H2O = a 1,2-diacyl-sn-glycero-3-phosphate + choline + H(+). Functionally, hydrolyzes glycerol-phospholipids at the terminal phosphodiesteric bond. Plays an important role in various cellular processes. The protein is Phospholipase D alpha 1 (PLD1) of Spuriopimpinella brachycarpa (Chamnamul).